We begin with the raw amino-acid sequence, 359 residues long: Homeotic protein knotted-1 (359 aa).

Disordered stretches follow at residues Met-1 to Ser-34 and Leu-213 to Pro-232. The segment covering Gly-16 to Pro-31 has biased composition (basic residues). The ELK domain occupies Glu-242–Leu-262. Residues Ser-263–Ser-326 constitute a DNA-binding region (homeobox; TALE-type).

The protein belongs to the TALE/KNOX homeobox family. As to quaternary structure, forms homodimers. Binds to MBP2C; this interaction reduces RNA binding capacity. In terms of tissue distribution, expressed in apical meristems of vegetative and floral stems as well as in the underlying ground meristem. Specifically expressed in vascular bundles developing both in the leaf and stem. Very low levels of expression in leaves.

It is found in the nucleus. The protein localises to the cell junction. The protein resides in the plasmodesma. Its subcellular location is the cytoplasm. In terms of biological role, binds to RNA. Possible transcription factor that regulates genes involved in development. Mutations in KN-1 alter leaf development. Foci of cells along the lateral vein do not differentiate properly but continue to divide, forming knots. May participate in the switch from indeterminate to determinate cell fates. Probably binds to the DNA sequence 5'-TGAC-3'. The sequence is that of Homeotic protein knotted-1 (KN-1) from Zea mays (Maize).